The following is a 384-amino-acid chain: Na(+)/H(+) antiporter NhaA (384 aa).

A run of 11 helical transmembrane segments spans residues 17–37, 53–73, 89–109, 118–138, 147–167, 171–191, 198–218, 251–271, 283–303, 321–341, and 354–374; these read SGLF…SAIA, LEYW…GLEL, MLPI…FLVM, GAGI…SLLG, IFLT…IAVF, TLLW…LILN, LIPY…SGVH, PVAF…VLSS, IGIA…LSML, ILAV…ITLL, and FVIL…LKYV.

The protein belongs to the NhaA Na(+)/H(+) (TC 2.A.33) antiporter family.

The protein localises to the cell inner membrane. The catalysed reaction is Na(+)(in) + 2 H(+)(out) = Na(+)(out) + 2 H(+)(in). In terms of biological role, na(+)/H(+) antiporter that extrudes sodium in exchange for external protons. In Flavobacterium psychrophilum (strain ATCC 49511 / DSM 21280 / CIP 103535 / JIP02/86), this protein is Na(+)/H(+) antiporter NhaA.